Consider the following 313-residue polypeptide: 3'-5' exoribonuclease YhaM (313 aa).

The segment at residues 22–90 (SSVKGTASNG…QLKIRQIRQA (69 aa)) is a DNA-binding region (OB). The region spanning 163-279 (HVVSMLRLAK…LHQIDLMDAS (117 aa)) is the HD domain.

The protein belongs to the YhaM family.

Functionally, shows a 3'-5' exoribonuclease activity. This is 3'-5' exoribonuclease YhaM from Listeria innocua serovar 6a (strain ATCC BAA-680 / CLIP 11262).